The sequence spans 95 residues: Integration host factor subunit beta (95 aa).

Belongs to the bacterial histone-like protein family. As to quaternary structure, heterodimer of an alpha and a beta chain.

In terms of biological role, this protein is one of the two subunits of integration host factor, a specific DNA-binding protein that functions in genetic recombination as well as in transcriptional and translational control. This Shewanella halifaxensis (strain HAW-EB4) protein is Integration host factor subunit beta.